The following is a 235-amino-acid chain: Small ribosomal subunit protein uS2c (235 aa).

The protein belongs to the universal ribosomal protein uS2 family.

The protein localises to the plastid. The protein resides in the chloroplast. In Adiantum capillus-veneris (Maidenhair fern), this protein is Small ribosomal subunit protein uS2c (rps2).